The following is a 286-amino-acid chain: Interferon-induced 35 kDa protein homolog (286 aa).

Positions 5-26 (LQTVLYSLQEEQARLKMRLQEL) are leucine-zipper. NID domains are found at residues 81-170 (ALVT…GDVE) and 183-266 (FADE…GEVE).

This sequence belongs to the NMI family. In terms of assembly, homodimer. Also interacts with B-ATF. Interacts with TRIM21. Interacts (via NID domains) with NMI (via NID domains); the interaction is direct and is facilitated by TRIM21. Phosphorylated. Dephosphorylation correlates with the formation of a complex with NMI.

The protein resides in the cytoplasm. Its subcellular location is the nucleus. The protein localises to the secreted. Acts as a signaling pathway regulator involved in innate immune system response. In response to interferon IFN-alpha, associates in a complex with transcriptional regulator NMI to regulate immune response; the complex formation prevents proteasome-mediated degradation of IFI35 and correlates with IFI35 dephosphorylation. In complex with NMI, inhibits virus-triggered type I interferon/IFN-beta production. In complex with NMI, negatively regulates nuclear factor NF-kappa-B signaling by inhibiting the nuclear translocation, activation and transcription of the NF-kappa-B subunit p65/RELA, resulting in the inhibition of endothelial cell proliferation, migration and re-endothelialization of injured arteries. Beside its role as an intracellular signaling pathway regulator, also functions extracellularly as damage-associated molecular patterns (DAMPs) to promote inflammation when actively released by macrophage to the extracellular space during cell injury and pathogen invasion. Macrophage-secreted IFI35 activates NF-kappa-B signaling in adjacent macrophages through Toll-like receptor 4/TLR4 activation, thereby inducing NF-kappa-B translocation from the cytoplasm into the nucleus which promotes the release of pro-inflammatory cytokines. This is Interferon-induced 35 kDa protein homolog from Mus musculus (Mouse).